The sequence spans 176 residues: Probable Brix domain-containing ribosomal biogenesis protein (176 aa).

Residues 6-176 (IEIVFTSSRD…QLYDRNKNIN (171 aa)) enclose the Brix domain.

Probably involved in the biogenesis of the ribosome. This is Probable Brix domain-containing ribosomal biogenesis protein from Sulfurisphaera tokodaii (strain DSM 16993 / JCM 10545 / NBRC 100140 / 7) (Sulfolobus tokodaii).